Consider the following 599-residue polypeptide: Peptidyl-Asp metalloendopeptidase (599 aa).

A signal peptide spans 1 to 20; sequence MKKSLLCSTLALAVASAAQA. Residue His-164 participates in Zn(2+) binding. Residue Glu-165 is part of the active site. Zn(2+)-binding residues include His-168 and His-174. The tract at residues 265 to 285 is disordered; that stretch reads PTKVPGTVNPGSGGDTPTPPD. A CBM-cenC domain is found at 458–583; sequence YDFESGIGGW…KRAELMILSG (126 aa).

Belongs to the peptidase M72 family. As to quaternary structure, interacts with BamI, the product of its coregulated adjacent gene, which inhibits its protease activity. The cofactor is Zn(2+). Post-translationally, made as a membrane-associated pre-pro-protein, which is exported to the periplasm with removal of the signal peptide, leading to a protein with a molecular mass of 65 kDa, that likely contains the metzincin domain plus tandem carbohydrate-binding domains. Undergoes processing during export to the extracellular milieu, probably by autocatalysis, yielding a (mature length) 25 kDa protein that most likely corresponds to the metzincin domain only.

It is found in the secreted. The catalysed reaction is Cleavage of Xaa-|-Asp, Xaa-|-Glu and Xaa-|-cysteic acid bonds.. Is inhibited by BamI, the product of its coregulated adjacent gene. Its function is as follows. Metalloprotease with endopeptidase activity. Specifically cleaves on the N-terminal side of aspartyl, glutamyl and cysteic acid residues. Mep72 appears to be a secreted biofilm-specific regulator that affects the processing of a very specific subset of virulence factors exported by the type III secretion machinery as well as flagellar proteins. Binds directly to ExoS and PcrV and affects the processing of these proteins in the biofilm secretome, but contrary to expectation, Mep72 seems to protect these targets against proteolytic processing/degradation. This is Peptidyl-Asp metalloendopeptidase from Pseudomonas aeruginosa (strain ATCC 15692 / DSM 22644 / CIP 104116 / JCM 14847 / LMG 12228 / 1C / PRS 101 / PAO1).